We begin with the raw amino-acid sequence, 237 residues long: Ferritin, mitochondrial (237 aa).

A mitochondrion-targeting transit peptide spans 1–49; the sequence is MLSCFWFFSKHISSALMSLPRVLHRFTAPQCLASRYPLGPLLASPRRLL. The Ferritin-like diiron domain occupies 66–215; the sequence is QNFHPDSEAA…DHVHNLVTMG (150 aa). Fe cation is bound by residues Glu83, Glu118, His121, Glu163, and Gln197.

This sequence belongs to the ferritin family. As to quaternary structure, homooligomer of 24 subunits. The functional molecule is roughly spherical and contains a central cavity into which the polymeric mineral iron core is deposited.

The protein localises to the mitochondrion. It carries out the reaction 4 Fe(2+) + O2 + 4 H(+) = 4 Fe(3+) + 2 H2O. In terms of biological role, catalyzes the oxidation of ferrous iron(II) to ferric iron(III) and stores iron in a soluble, non-toxic, readily available form. Important for iron homeostasis. Iron is taken up in the ferrous form and deposited as ferric hydroxides after oxidation. In Mus musculus (Mouse), this protein is Ferritin, mitochondrial.